A 262-amino-acid chain; its full sequence is Small ribosomal subunit protein eS1 (262 aa).

Residues 235–253 (HGDGKGSDEPGAKVSRPEA) show a composition bias toward basic and acidic residues. Residues 235-262 (HGDGKGSDEPGAKVSRPEAYEPPVQESV) are disordered.

Belongs to the eukaryotic ribosomal protein eS1 family. Component of the small ribosomal subunit. Mature ribosomes consist of a small (40S) and a large (60S) subunit. The 40S subunit contains about 33 different proteins and 1 molecule of RNA (18S). The 60S subunit contains about 49 different proteins and 3 molecules of RNA (28S, 5.8S and 5S).

It localises to the cytoplasm. This Triatoma infestans (Assassin bug) protein is Small ribosomal subunit protein eS1.